The chain runs to 206 residues: Small ribosomal subunit protein uS4 (206 aa).

An S4 RNA-binding domain is found at 96–156 (NRLDNVTYRI…KNSKLQSRIK (61 aa)).

It belongs to the universal ribosomal protein uS4 family. As to quaternary structure, part of the 30S ribosomal subunit. Contacts protein S5. The interaction surface between S4 and S5 is involved in control of translational fidelity.

One of the primary rRNA binding proteins, it binds directly to 16S rRNA where it nucleates assembly of the body of the 30S subunit. In terms of biological role, with S5 and S12 plays an important role in translational accuracy. This chain is Small ribosomal subunit protein uS4, found in Buchnera aphidicola subsp. Baizongia pistaciae (strain Bp).